Here is a 419-residue protein sequence, read N- to C-terminus: Octopressin receptor (419 aa).

The Extracellular segment spans residues Met-1 to Glu-37. 2 N-linked (GlcNAc...) asparagine glycosylation sites follow: Asn-3 and Asn-22. Residues Ile-38 to Val-58 form a helical membrane-spanning segment. At Leu-59–Asp-80 the chain is on the cytoplasmic side. The helical transmembrane segment at Ile-81–Leu-101 threads the bilayer. The Extracellular segment spans residues Gly-102 to Arg-108. Cysteines 107 and 182 form a disulfide. Residues Val-109 to Ala-129 form a helical membrane-spanning segment. The Cytoplasmic portion of the chain corresponds to Leu-130–Thr-153. The chain crosses the membrane as a helical span at residues Thr-154–Val-174. Topologically, residues Asp-175–Asn-192 are extracellular. Asn-185 carries N-linked (GlcNAc...) asparagine glycosylation. The chain crosses the membrane as a helical span at residues Ile-193–Phe-213. Topologically, residues Phe-214–Lys-292 are cytoplasmic. The tract at residues Ser-253–Arg-274 is disordered. Positions Asn-259–Arg-274 are enriched in basic and acidic residues. The chain crosses the membrane as a helical span at residues Leu-293–Met-313. Over Ala-314–Leu-329 the chain is Extracellular. Residues Val-330–Phe-350 traverse the membrane as a helical segment. The Cytoplasmic portion of the chain corresponds to Ser-351 to Cys-419.

It belongs to the G-protein coupled receptor 1 family. Vasopressin/oxytocin receptor subfamily. In terms of tissue distribution, present in the nervous system and peripheral tissues.

Its subcellular location is the cell membrane. Acts as a receptor for octopressin. The sequence is that of Octopressin receptor from Octopus vulgaris (Common octopus).